The following is a 604-amino-acid chain: MLKDIRKPFQYPKLPIDKKEGAKKRAKAKDTKGTLRRIWSYLAERKGLLILVMLMVVISAIFGLLGPFVIGKAIDHFIVGKTVSGLIPVLLLLLAIYIIQSLSLWFQNYWMITISQGTVFRMRSELFTHLHELPIPFFDKQRHGELMSRVTNDIENVSSTLNTSVIQILSSVITFVGTIAVMLYMSPLLTLITLTIIPVMAASLKWITNRTGKLFKEQQKNLGDLNGYIEESVSGAKVIKAYSREKQITAEFLEKNAALKTSGFWAQTISGFIPKVMNSLNNLSFTMIAAIGGLFALKGWISIGSIVVFAEYSRQFTRPLNDLANQFNTMLSAIAGAERVFDVLDEKEEREDEKNAVHQPIQTGSIEFRDVSFGYDKGQQTLKHLQFTVPAGQSIAFVGPTGAGKTTVTNLLARFYEPNDGKILIDGTDIKTLTRASLRKNMGFVLQDSFLFQGTIRENIRYGRLDASDQEVEAAAKTANAHSFIERLPKGYDTVLTQNGSGISQGQKQLISIARAVLADPVLLILDEATSNIDTVTEVNIQEALARLMEGRTSVIIAHRLNTIQRADQIVVLKNGEMIEKGSHDELIRQKGFYSDLYESQFEK.

In terms of domain architecture, ABC transmembrane type-1 spans 49 to 332 (LILVMLMVVI…LANQFNTMLS (284 aa)). A run of 4 helical transmembrane segments spans residues 50–70 (ILVM…PFVI), 86–106 (LIPV…SLWF), 172–192 (VITF…LTLI), and 288–308 (IAAI…SIVV). The ABC transporter domain maps to 366-600 (IEFRDVSFGY…KGFYSDLYES (235 aa)). 399 to 406 (GPTGAGKT) contacts ATP. Residues 510–530 (LISIARAVLADPVLLILDEAT) traverse the membrane as a helical segment.

It belongs to the ABC transporter superfamily.

It localises to the cell membrane. This is an uncharacterized protein from Bacillus subtilis (strain 168).